Here is a 71-residue protein sequence, read N- to C-terminus: Plasticin-DA1 (71 aa).

Residues 1-22 (MAFLKKSLFLVLFLALVPLSIC) form the signal peptide. Residues 23–42 (EAEKREEENEEKQEDDDESE) constitute a propeptide that is removed on maturation. The segment at 25-45 (EKREEENEEKQEDDDESEKKR) is disordered. Acidic residues predominate over residues 30–40 (ENEEKQEDDDE). Gly68 is subject to Glycine amide. Residues 70-71 (ER) constitute a propeptide that is removed on maturation.

It belongs to the frog skin active peptide (FSAP) family. Plasticin subfamily. In terms of tissue distribution, expressed by the skin glands.

It localises to the secreted. It is found in the target cell membrane. In terms of biological role, neutral peptide with no antimicrobial activity. Does not permeate bacterial membranes. May act in synergy with cationic peptides by enhancing their activity. Has a moderate hemolytic activity. It interacts with zwitterionic phospholipids (DMPC) without perturbing either the interface or inside of the bilayer, whereas it causes little perturbations at the interface peptide-anionic vesicles (DMPG) as well as in the bilayer alkyl chains. This Agalychnis dacnicolor (Giant Mexican leaf frog) protein is Plasticin-DA1.